The following is a 2555-amino-acid chain: Ubiquitin carboxyl-terminal hydrolase 9Y (2555 aa).

The segment at 1-66 (MTAITHGSPV…APPQHEDEEP (66 aa)) is disordered. Polar residues predominate over residues 13–45 (NDSQGQVLDGQSQHLFQQNQTSSPDSSNENSVA). Ser589 bears the Phosphoserine mark. Thr591 is modified (phosphothreonine). A disordered region spans residues 972-997 (NMPSSPDSSSDSSTASPGNHRNHYND). Over residues 974–984 (PSSPDSSSDSS) the composition is skewed to low complexity. The 400-residue stretch at 1559–1958 (VGLKNAGATC…NAYILFYEQM (400 aa)) folds into the USP domain. The active-site Nucleophile is Cys1568. Residues Cys1729, His1731, Cys1773, and Cys1776 each coordinate Zn(2+). Catalysis depends on His1881, which acts as the Proton acceptor. Position 2444 is a phosphoserine (Ser2444). Residues 2476 to 2485 (PEEEPDDQDA) show a composition bias toward acidic residues. The segment at 2476 to 2555 (PEEEPDDQDA…EVSSPQMKDQ (80 aa)) is disordered. Polar residues-rich tracts occupy residues 2504-2514 (PASQYQQNNHV) and 2528-2555 (NNPQ…MKDQ). At Tyr2541 the chain carries Phosphotyrosine. Ser2548 is modified (phosphoserine).

This sequence belongs to the peptidase C19 family. In terms of tissue distribution, widely expressed in embryonic and adult tissues.

The enzyme catalyses Thiol-dependent hydrolysis of ester, thioester, amide, peptide and isopeptide bonds formed by the C-terminal Gly of ubiquitin (a 76-residue protein attached to proteins as an intracellular targeting signal).. The protein operates within protein modification; protein ubiquitination. In terms of biological role, deubiquitinase that mediates deubiquitination of target proteins. May stabilize target proteins that are important for male germ cell development. This Homo sapiens (Human) protein is Ubiquitin carboxyl-terminal hydrolase 9Y.